Reading from the N-terminus, the 257-residue chain is UPF0246 protein VCM66_2278 (257 aa).

Belongs to the UPF0246 family.

The chain is UPF0246 protein VCM66_2278 from Vibrio cholerae serotype O1 (strain M66-2).